We begin with the raw amino-acid sequence, 396 residues long: Histidine-rich glycoprotein (396 aa).

Cystatin domains are found at residues 1-102 (AVNP…SALT) and 103-169 (NMRA…RFSA). 6 disulfides stabilise this stretch: Cys7/Cys375, Cys56/Cys67, Cys77/Cys92, Cys123/Cys297, Cys137/Cys160, and Cys212/Cys242. Asn70 carries an N-linked (GlcNAc...) asparagine; partial glycan. Asn91 and Asn122 each carry an N-linked (GlcNAc...) asparagine glycan. The disordered stretch occupies residues 176-322 (RPFHSGEHEH…GPGKGHFRFH (147 aa)). Basic and acidic residues predominate over residues 197-208 (GSKDHGHPHESY). An N-linked (GlcNAc...) asparagine glycan is attached at Asn220. Pro residues predominate over residues 233–246 (LPFPPPGLRCPHPP). Residues 255 to 265 (PPHDHSSDEHH) show a composition bias toward basic and acidic residues. Over residues 266–284 (PHGHHPHGHHPHGHHPHGH) the composition is skewed to basic residues. Over residues 285 to 296 (HPPDNDFYDHGP) the composition is skewed to basic and acidic residues. The segment covering 304 to 322 (PPPRHSKERGPGKGHFRFH) has biased composition (basic residues). Ser309 carries the phosphoserine modification.

In terms of assembly, interacts (via the HRR domain) with TPM1; the interaction appears to contribute to the antiangiogenic properties of the HRR domain. Interacts with THBS1 (via the TSP type I repeats); the interaction blocks the antiangiogenic effect of THBS1 with CD36. Interacts with PLG (via its Kringle domains); the interaction tethers PLG to the cell surface and enhances its activation. Interacts with THBS2; the interaction blocks the antiangiogenic effect of THBS2 with CD36. Interacts with HPSE; the interaction is enhanced at acidic pH, partially inhibits binding of HPSE to cell surface receptors and modulates its enzymatic activity. Interacts (via the HRR domain) with TMP1; the interaction partially mediates the antiangiogenic properties of HRG. Interacts with kappa and lambda light chains of IgG molecules. Interacts with ATP5F1A; the interaction occurs on the surface of T-cells and alters their cell morphology in concert with CONA. Binds IgG molecules containing kappa and lambda light chains and inhibits the formation of insoluble immunoglobulin complexes. Interacts with F12; the interaction, which is enhanced in the presence of zinc ions and inhibited by heparin-binding to HRG, inhibits factor XII autoactivation and contact-initiated coagulation. In terms of processing, N-glycosylated. Post-translationally, proteolytic cleavage produces several HRG fragments which are mostly disulfide-linked and, therefore, not released. On platelet activation, may release a 33 kDa antiangiogenic peptide which encompasses the HRR.

It localises to the secreted. In terms of biological role, plasma glycoprotein that binds a number of ligands such as heme, heparin, heparan sulfate, thrombospondin, plasminogen, and divalent metal ions. Inhibits rosette formation. Acts as an adapter protein and implicated in regulating many processes such as immune complex and pathogen clearance, cell adhesion, angiogenesis, coagulation and fibrinolysis. Mediates clearance of necrotic cells through enhancing the phagocytosis of necrotic cells in a heparan sulfate-dependent pathway. This process can be regulated by the presence of certain HRG ligands such as heparin and zinc ions. Binds to IgG subclasses of immunoglobins containing kappa and lambda light chains with different affinities regulating their clearance and inhibiting the formation of insoluble immune complexes. Tethers plasminogen to the cell surface. Binds T-cells and alters the cell morphology. Modulates angiogenesis by blocking the CD6-mediated antiangiongenic effect of thrombospondins, THBS1 and THBS2. In Bos taurus (Bovine), this protein is Histidine-rich glycoprotein (HRG).